A 1067-amino-acid chain; its full sequence is MAILHFSLPLIVSFLRPHASPRFFLLPRSLSQSPFLSRRRFHRTSAVSSAAVHHQSYRNPDDDVTRAVSVPTFQQAIQRLQEYWASVGCAVMQPSNTEVGAGTMNPCTFLRVLGPEPWNVAYVEPSIRPDDSRYGENPNRLQRHTQFQVILKPDPGNSQQLFINSLSALGIDVTAHDIRFVEDNWESPVLGAWGLGWEIWMDGMEITQFTYFQQAGSLPLSPVSVEITYGLERIIMLLQEVDHFKKILYADGITYGELFLENEKEMSSYYLEHASVDRLQKHFDYFDEEARSLLALGLPIPAYDQLLKTSHAFNILDARGFIGVTERARYFGRMRSLARQCAQLWLATRESLGHPLGVASEPVPPVCHRAALEKVAEKVSEDPRSFIIEIGTEEMPPQDVINASEQLRVLVLELLENQRLRHGAVKAFGTPRRLVVLVDAMSSKQLEEEVEVRGPPASKAFDDEGNPTKAAEGFSRRYGVPLEKLYRKVSGKTEYVHARVTEPARLALEVLSEDLPGILAKISFPKSMRWNSSVMFSRPIRWVMALHGDLVVPFSFAGISSGNVSCGLRNTASASLLVQNAESYEDTMRNSGINIEIEERKKIILEKSNALAKSVSGRLVVPQNLLNEVANLVEAPVPLIGKFKESFLELPEELLTIVMQKHQKYFSIIDESGQLLPYFIAVANGAINEDVVKKGNEAVLRARYEDAKFFYEVDTRKRFSEFRDQLQGILFHEKLGTMLDKMNRLKKMVSKLCLALKIDEDLLPVVEDAASLAMSDLATAVVTEFTALSGIMARHYALRDGYSEQIAEALLEITLPRFSGDVIPKTDAGMVLAIGDRLDSLVGLFAAGCQPSSTNDPFGLRRISYGLVQILVEKDKNVNFKRVLELAASVQPTKVEANTVEDVYQFVTRRLEQLLVDNGVSPEVVRSVLAERGNNPCLAARTAYKTEKLSKGEMFPKIVEAYSRPTRIVRGKDVGVGVEVDENAFETPQERTLWSTYTSIKDRIHTGIEIEDFTEISMQLVEPLEDFFNNVFVMVEEERVRKNRLALLNNIANLPKGVIDLSFLPGF.

A chloroplast and mitochondrion-targeting transit peptide spans 1–50; the sequence is MAILHFSLPLIVSFLRPHASPRFFLLPRSLSQSPFLSRRRFHRTSAVSSA. Glu513 is a substrate binding site. Residues 589–596, 619–624, 744–745, and 859–862 each bind ATP; these read RNSGINIE, LVVPQN, RL, and GLRR. Substrate is bound at residue 624–628; it reads NLLNE. 855–859 is a binding site for substrate; the sequence is NDPFG.

It belongs to the class-II aminoacyl-tRNA synthetase family. In terms of assembly, homodimer.

The protein resides in the plastid. Its subcellular location is the chloroplast. It localises to the mitochondrion. It catalyses the reaction tRNA(Gly) + glycine + ATP = glycyl-tRNA(Gly) + AMP + diphosphate. Functionally, catalyzes the attachment of glycine to tRNA(Gly). Is also able produce diadenosine tetraphosphate (Ap4A), a universal pleiotropic signaling molecule needed for cell regulation pathways, by direct condensation of 2 ATPs. This chain is Glycine--tRNA ligase, chloroplastic/mitochondrial 2, found in Arabidopsis thaliana (Mouse-ear cress).